We begin with the raw amino-acid sequence, 284 residues long: tRNA uridine(34) hydroxylase (284 aa).

The 95-residue stretch at 132 to 226 folds into the Rhodanese domain; sequence AGRPVVMLDT…YFEEVGGAHY (95 aa). The active-site Cysteine persulfide intermediate is the cysteine 186.

It belongs to the TrhO family.

The catalysed reaction is uridine(34) in tRNA + AH2 + O2 = 5-hydroxyuridine(34) in tRNA + A + H2O. Catalyzes oxygen-dependent 5-hydroxyuridine (ho5U) modification at position 34 in tRNAs. This Burkholderia cenocepacia (strain HI2424) protein is tRNA uridine(34) hydroxylase.